Reading from the N-terminus, the 446-residue chain is Nitrate/nitrite binding protein NrtA (446 aa).

Positions 1 to 28 are cleaved as a signal peptide; sequence MSNFSRSTRRKFMFTAGAAAIGGVVLHG. Residue Cys29 is the site of N-palmitoyl cysteine attachment. The S-diacylglycerol cysteine moiety is linked to residue Cys29. The nitrate site is built by Trp102, Gln155, His196, Gly240, and Lys269.

It belongs to the CmpA/NrtA family. In terms of assembly, the complex is composed of two ATP-binding proteins (NrtC and NrtD), two transmembrane proteins (NrtB) and a solute-binding protein (NrtA).

It is found in the cell inner membrane. Its function is as follows. Part of the ABC transporter complex NrtABCD involved in nitrate uptake. The complex is probably also involved in nitrite transport. NrtA is the substrate-binding protein. Binds nitrate. This is Nitrate/nitrite binding protein NrtA from Synechocystis sp. (strain ATCC 27184 / PCC 6803 / Kazusa).